The primary structure comprises 436 residues: Voltage-gated purine nucleotide uniporter SLC17A9 (436 aa).

10 helical membrane passes run 64-84 (IVLSSFFWGYCLTQVVGGHLG), 92-112 (VILLSASAWGSITAVTPLLAH), 118-138 (LAFMTFSRILMGLLQGVYFPA), 158-178 (IVGAGSQFGTLLTGAVGSLLL), 181-201 (YGWQSIFYFSGGLTLLWVWYV), 239-259 (PAVWAAVVSQLSAACSFFILL), 276-296 (WIFNVVPWLVAIPASLFSGFL), 316-336 (GMGLGLSSVFALCLGHTSSFC), 369-389 (GFLFGVANTAGALAGVVGVCL), and 402-422 (CLFNLVAIISNLGLCTFLVFG).

This sequence belongs to the major facilitator superfamily. Sodium/anion cotransporter family. In terms of tissue distribution, widely expressed, but more predominantly in adrenal gland, brain and thyroid.

The protein resides in the cytoplasmic vesicle. It localises to the secretory vesicle. It is found in the chromaffin granule membrane. Its subcellular location is the secretory vesicle membrane. The protein localises to the lysosome membrane. The catalysed reaction is ATP(in) = ATP(out). It catalyses the reaction ADP(in) = ADP(out). The enzyme catalyses GTP(in) = GTP(out). With respect to regulation, activity is chloride-dependent. Inhibited by AMP-PNP, gammaS-ATP, diadenosine triphosphate, 4,4'- diisothiocyanatostilbene-2,2'-disulfonate (DIDS) and Evans blue. Its function is as follows. Voltage-gated ATP nucleotide uniporter that can also transport the purine nucleotides ADP and GTP. Uses the membrane potential as the driving force to control ATP accumulation in lysosomes and secretory vesicles. By controlling ATP storage in lysosomes, regulates ATP-dependent proteins of these organelles. Also indirectly regulates the exocytosis of ATP through its import into lysosomes in astrocytes and secretory vesicles such as adrenal chromaffin granules, mucin granules and synaptic vesicles. In Homo sapiens (Human), this protein is Voltage-gated purine nucleotide uniporter SLC17A9.